A 1020-amino-acid chain; its full sequence is FERM domain-containing protein 4A (1020 aa).

One can recognise an FERM domain in the interval 5 to 307 (RRCQVHLLDD…SQHQFYLDRK (303 aa)). The interval 343–405 (KGKIISGSSG…RLCLREAELT (63 aa)) is necessary for interaction with CYTH1. A compositionally biased stretch (low complexity) spans 351–367 (SGSLLSSGSQESDSSQS). Residues 351–371 (SGSLLSSGSQESDSSQSAKKD) form a disordered region. Residues 367–401 (SAKKDMLAALKSRQEALEETLRQRLEELKRLCLRE) adopt a coiled-coil conformation. Residue S515 is modified to Phosphoserine. Positions 538–665 (DEDSQVTSTI…MPSTPDLRVR (128 aa)) are disordered. Residues 542 to 551 (QVTSTISPLQ) are compositionally biased toward polar residues. Over residues 556–572 (GLPPRPPSSHNRPPPPQ) the composition is skewed to pro residues. The tract at residues 565-920 (HNRPPPPQSL…QWYQRSTASH (356 aa)) is necessary for tight junction and adherens junction localization; Requires for interaction with PARD3. Residues S590 and S601 each carry the phosphoserine modification. Residues 609-624 (VKKRSSHGHSSSHKRF) are compositionally biased toward basic residues. Over residues 626–658 (STGSCTEAGVSSSLQNSPIRSLPHWNSQSSMPS) the composition is skewed to polar residues. 2 positions are modified to phosphoserine: S666 and S696. Disordered regions lie at residues 698–741 (ESQG…HSSS) and 757–810 (AEDS…QSQP). Low complexity predominate over residues 773–796 (RAAGALGSASSGSMPNLAARSGAA). Residues S785, S854, and S882 each carry the phosphoserine modification. 2 disordered regions span residues 862-949 (KESW…STFV) and 961-1020 (CKAT…STDE). Over residues 893-910 (DGAHDKGSGRAAVSDELR) the composition is skewed to basic and acidic residues. The span at 927–947 (SHTSSTSSDSGSQYSTSSQST) shows a compositional bias: low complexity. 3 stretches are compositionally biased toward polar residues: residues 967 to 981 (ALPQ…SSEI), 994 to 1004 (TWQTGEATENS), and 1011 to 1020 (ESPTHQSTDE).

In terms of assembly, interacts (via coiled-coil domain) with CYTH1 (via coiled-coil domain). Interacts with PARD3 (via coiled-coil domain). Found in a complex with PARD3, CYTH1 and FRMD4A. Interacts with CYTH2. Interacts with CYTH3.

Its subcellular location is the cytoplasm. It localises to the cytoskeleton. The protein resides in the cell junction. It is found in the adherens junction. The protein localises to the tight junction. Functionally, scaffolding protein that regulates epithelial cell polarity by connecting ARF6 activation with the PAR3 complex. Plays a redundant role with FRMD4B in epithelial polarization. May regulate MAPT secretion by activating ARF6-signaling. The protein is FERM domain-containing protein 4A (Frmd4a) of Mus musculus (Mouse).